The chain runs to 286 residues: Probable aquaporin-3 (286 aa).

Residues 1–34 (MADTYGMNGHNGHVKDRRSSSMNGRNRLYAQQEP) are disordered. Residues 1 to 52 (MADTYGMNGHNGHVKDRRSSSMNGRNRLYAQQEPQRTTHLSEFGKHMVAASG) are Cytoplasmic-facing. A helical membrane pass occupies residues 53 to 73 (EFVGTFLFLYFGYAGNIVAVL). Over 74–87 (QEPISGPNGTLANN) the chain is Extracellular. Asn81 and Asn86 each carry an N-linked (GlcNAc...) asparagine glycan. A helical transmembrane segment spans residues 88 to 108 (TVMYIAMAYGFSLLVNVWTFY). Residues 109 to 135 (RISGGLFNPAVTFGLCLSGQLPWIRAL) lie on the Cytoplasmic side of the membrane. The NPA 1 motif lies at 116 to 118 (NPA). A helical transmembrane segment spans residues 136-156 (FLFPSQIIAAMCAGGLVNAMF). The Extracellular segment spans residues 157-175 (PGSASIANTTLGPNTSIAQ). N-linked (GlcNAc...) asparagine glycosylation is found at Asn164 and Asn170. A helical membrane pass occupies residues 176 to 196 (GVFLEMFFTAQLVFVVLMLAA). The Cytoplasmic segment spans residues 197-202 (EKSRDT). The helical transmembrane segment at 203 to 223 (FLAPVGIGLALFVALIPGVFV) threads the bilayer. The Extracellular segment spans residues 224 to 244 (TGGSANPVRSFGCAVGSRDFP). Residues 229–231 (NPV) carry the NPA 2 motif. The chain crosses the membrane as a helical span at residues 245–265 (GYHWIYWVGPLLGAALAAGYF). Residues 266–286 (RLVKMMHYEEANPGQDSPVDV) lie on the Cytoplasmic side of the membrane.

This sequence belongs to the MIP/aquaporin (TC 1.A.8) family.

Its subcellular location is the membrane. It carries out the reaction H2O(in) = H2O(out). In terms of biological role, probable water channel that may have redundant functions with FgAQP5. The polypeptide is Probable aquaporin-3 (Gibberella zeae (strain ATCC MYA-4620 / CBS 123657 / FGSC 9075 / NRRL 31084 / PH-1) (Wheat head blight fungus)).